A 447-amino-acid polypeptide reads, in one-letter code: N-succinylarginine dihydrolase (447 aa).

Substrate-binding positions include 19–28, N110, and 137–138; these read AGLSFGNEAS and HR. Residue E174 is part of the active site. A substrate-binding site is contributed by R212. H248 is a catalytic residue. Residues D250 and N359 each coordinate substrate. C365 serves as the catalytic Nucleophile.

This sequence belongs to the succinylarginine dihydrolase family. Homodimer.

The catalysed reaction is N(2)-succinyl-L-arginine + 2 H2O + 2 H(+) = N(2)-succinyl-L-ornithine + 2 NH4(+) + CO2. It functions in the pathway amino-acid degradation; L-arginine degradation via AST pathway; L-glutamate and succinate from L-arginine: step 2/5. In terms of biological role, catalyzes the hydrolysis of N(2)-succinylarginine into N(2)-succinylornithine, ammonia and CO(2). In Escherichia coli (strain ATCC 8739 / DSM 1576 / NBRC 3972 / NCIMB 8545 / WDCM 00012 / Crooks), this protein is N-succinylarginine dihydrolase.